A 515-amino-acid polypeptide reads, in one-letter code: Glucose-6-phosphate 1-dehydrogenase (515 aa).

Residues arginine 53 and lysine 160 each coordinate NADP(+). Positions 190, 194, 228, and 247 each coordinate substrate. Histidine 252 acts as the Proton acceptor in catalysis. Residue lysine 352 coordinates substrate.

This sequence belongs to the glucose-6-phosphate dehydrogenase family.

The enzyme catalyses D-glucose 6-phosphate + NADP(+) = 6-phospho-D-glucono-1,5-lactone + NADPH + H(+). The protein operates within carbohydrate degradation; pentose phosphate pathway; D-ribulose 5-phosphate from D-glucose 6-phosphate (oxidative stage): step 1/3. In terms of biological role, catalyzes the oxidation of glucose 6-phosphate to 6-phosphogluconolactone. This Treponema pallidum (strain Nichols) protein is Glucose-6-phosphate 1-dehydrogenase.